We begin with the raw amino-acid sequence, 712 residues long: Patatin-like phospholipase domain-containing protein AFUA_1G04970 (712 aa).

Residues Met1–Tyr13 show a composition bias toward basic and acidic residues. The segment at Met1–Asp20 is disordered. Residues Trp85–Thr105 traverse the membrane as a helical segment. The PNPLA domain occupies Leu275–Asn466. The short motif at Gly306–Gly310 is the GXSXG element. The Nucleophile role is filled by Ser308. The active-site Proton acceptor is the Asp453. A disordered region spans residues Arg628–Glu688. Basic and acidic residues-rich tracts occupy residues Asp632–Asp646 and Arg652–Glu664. Over residues Asp667–Pro676 the composition is skewed to polar residues. Residues His677–Glu688 are compositionally biased toward basic and acidic residues.

The protein belongs to the PLPL family.

It is found in the membrane. In terms of biological role, probable lipid hydrolase. The sequence is that of Patatin-like phospholipase domain-containing protein AFUA_1G04970 from Aspergillus fumigatus (strain ATCC MYA-4609 / CBS 101355 / FGSC A1100 / Af293) (Neosartorya fumigata).